Reading from the N-terminus, the 444-residue chain is Elongation factor 1-alpha (444 aa).

Residues 15-236 (KPHINLAVVG…VLDTFQPPPR (222 aa)) enclose the tr-type G domain. Residues 24-31 (GHVDNGKS) are G1. Residue 24–31 (GHVDNGKS) coordinates GTP. Ser31 contacts Mg(2+). A G2 region spans residues 80 to 84 (GVTIE). Positions 101-104 (DLPG) are G3. GTP-binding positions include 101-105 (DLPGH) and 163-166 (NKMD). Residues 163–166 (NKMD) are G4. A G5 region spans residues 202-204 (SAV).

It belongs to the TRAFAC class translation factor GTPase superfamily. Classic translation factor GTPase family. EF-Tu/EF-1A subfamily.

Its subcellular location is the cytoplasm. It carries out the reaction GTP + H2O = GDP + phosphate + H(+). Functionally, GTP hydrolase that promotes the GTP-dependent binding of aminoacyl-tRNA to the A-site of ribosomes during protein biosynthesis. This is Elongation factor 1-alpha from Pyrobaculum arsenaticum (strain DSM 13514 / JCM 11321 / PZ6).